Reading from the N-terminus, the 268-residue chain is Thiazole synthase (268 aa).

Lys-108 acts as the Schiff-base intermediate with DXP in catalysis. Residues Gly-169, 195 to 196 (AG), and 217 to 218 (NS) contribute to the 1-deoxy-D-xylulose 5-phosphate site. Residues 248–268 (RLKENPLASPSSPLEGVISNN) form a disordered region. The span at 255–268 (ASPSSPLEGVISNN) shows a compositional bias: polar residues.

This sequence belongs to the ThiG family. As to quaternary structure, homotetramer. Forms heterodimers with either ThiH or ThiS.

The protein resides in the cytoplasm. The catalysed reaction is [ThiS sulfur-carrier protein]-C-terminal-Gly-aminoethanethioate + 2-iminoacetate + 1-deoxy-D-xylulose 5-phosphate = [ThiS sulfur-carrier protein]-C-terminal Gly-Gly + 2-[(2R,5Z)-2-carboxy-4-methylthiazol-5(2H)-ylidene]ethyl phosphate + 2 H2O + H(+). The protein operates within cofactor biosynthesis; thiamine diphosphate biosynthesis. Its function is as follows. Catalyzes the rearrangement of 1-deoxy-D-xylulose 5-phosphate (DXP) to produce the thiazole phosphate moiety of thiamine. Sulfur is provided by the thiocarboxylate moiety of the carrier protein ThiS. In vitro, sulfur can be provided by H(2)S. In Prochlorococcus marinus (strain NATL1A), this protein is Thiazole synthase.